The chain runs to 151 residues: Prefoldin subunit alpha (151 aa).

Belongs to the prefoldin subunit alpha family. In terms of assembly, heterohexamer of two alpha and four beta subunits.

It localises to the cytoplasm. Its function is as follows. Molecular chaperone capable of stabilizing a range of proteins. Seems to fulfill an ATP-independent, HSP70-like function in archaeal de novo protein folding. This chain is Prefoldin subunit alpha (pfdA), found in Aeropyrum pernix (strain ATCC 700893 / DSM 11879 / JCM 9820 / NBRC 100138 / K1).